The chain runs to 406 residues: Tryptophan 2,3-dioxygenase (406 aa).

Substrate contacts are provided by residues 72 to 76 (FIVTH) and R144. H328 serves as a coordination point for heme. T342 serves as a coordination point for substrate.

This sequence belongs to the tryptophan 2,3-dioxygenase family. Homotetramer. Dimer of dimers. Heme serves as cofactor.

It catalyses the reaction L-tryptophan + O2 = N-formyl-L-kynurenine. The protein operates within amino-acid degradation; L-tryptophan degradation via kynurenine pathway; L-kynurenine from L-tryptophan: step 1/2. Heme-dependent dioxygenase that catalyzes the oxidative cleavage of the L-tryptophan (L-Trp) pyrrole ring and converts L-tryptophan to N-formyl-L-kynurenine. Catalyzes the oxidative cleavage of the indole moiety. The chain is Tryptophan 2,3-dioxygenase from Xenopus tropicalis (Western clawed frog).